A 234-amino-acid chain; its full sequence is UPF0758 protein Rfer_3252 (234 aa).

The 123-residue stretch at 112–234 (IFATPDAVKH…ALSMAERGLL (123 aa)) folds into the MPN domain. Residues H183, H185, and D196 each contribute to the Zn(2+) site. Residues 183 to 196 (HNHPSGTVQPSRAD) carry the JAMM motif motif.

Belongs to the UPF0758 family.

This chain is UPF0758 protein Rfer_3252, found in Albidiferax ferrireducens (strain ATCC BAA-621 / DSM 15236 / T118) (Rhodoferax ferrireducens).